Here is a 618-residue protein sequence, read N- to C-terminus: Carbamoyl phosphate synthase large chain, C-terminal section (618 aa).

The oligomerization domain stretch occupies residues 1 to 78; it reads MDMEKLKEIL…ETFVYKEQDE (78 aa). Positions 79–477 are carbamoyl phosphate synthetic domain; sequence SNPSDRKKVI…YKAQLSANME (399 aa). The region spanning 208–399 is the ATP-grasp domain; sequence SKLLKKLNIP…LAKLATKIML (192 aa). Residues Arg244, Lys283, Leu285, Glu290, Gly315, Val316, His317, Ser318, Gln358, and Glu370 each coordinate ATP. Residues Gln358, Glu370, and Asn372 each coordinate Mg(2+). The Mn(2+) site is built by Gln358, Glu370, and Asn372. In terms of domain architecture, MGS-like spans 476–618; the sequence is MELPIVGNVF…ELDARIKNRF (143 aa). The tract at residues 478 to 618 is allosteric domain; that stretch reads LPIVGNVFIS…ELDARIKNRF (141 aa).

This sequence belongs to the CarB family. In terms of assembly, composed of two chains; the small (or glutamine) chain promotes the hydrolysis of glutamine to ammonia, which is used by the large (or ammonia) chain to synthesize carbamoyl phosphate. Tetramer of heterodimers (alpha,beta)4. The cofactor is Mg(2+). Mn(2+) is required as a cofactor.

It carries out the reaction hydrogencarbonate + L-glutamine + 2 ATP + H2O = carbamoyl phosphate + L-glutamate + 2 ADP + phosphate + 2 H(+). The catalysed reaction is hydrogencarbonate + NH4(+) + 2 ATP = carbamoyl phosphate + 2 ADP + phosphate + 2 H(+). Its pathway is amino-acid biosynthesis; L-arginine biosynthesis; carbamoyl phosphate from bicarbonate: step 1/1. It functions in the pathway pyrimidine metabolism; UMP biosynthesis via de novo pathway; (S)-dihydroorotate from bicarbonate: step 1/3. Large subunit of the glutamine-dependent carbamoyl phosphate synthetase (CPSase). CPSase catalyzes the formation of carbamoyl phosphate from the ammonia moiety of glutamine, carbonate, and phosphate donated by ATP, constituting the first step of 2 biosynthetic pathways, one leading to arginine and/or urea and the other to pyrimidine nucleotides. The large subunit (synthetase) binds the substrates ammonia (free or transferred from glutamine from the small subunit), hydrogencarbonate and ATP and carries out an ATP-coupled ligase reaction, activating hydrogencarbonate by forming carboxy phosphate which reacts with ammonia to form carbamoyl phosphate. The polypeptide is Carbamoyl phosphate synthase large chain, C-terminal section (carB2) (Methanocaldococcus jannaschii (strain ATCC 43067 / DSM 2661 / JAL-1 / JCM 10045 / NBRC 100440) (Methanococcus jannaschii)).